The following is a 378-amino-acid chain: MAKKRIVVMYGGKADEHSISCISAASALRALDTDKFEAIPVGITKDGKWIVNGENPLGWSLDEGLPTVEKTPGAKDVVLEVALGQDGFFAREDDGTMTPFGHVDAVFPVLHGPYGEDGTIQGLFEMMGVPYVGCGVLASAACMDKHYTKVLLAAAGIPVAPGITLDARSFDKASEFKTDADAIMAQVSEAGLQYPLFVKPSRAGSSFGVTKVEHEGDAAELAAAVYEASRHDWRILVEQGIDAREIECAVLCPKAGEAPQASWPGEIVLDKRAEGDDQFYDFDSKYMDAAASHVEVPANLPEETLNLVRETAKKAFVAVDGAGLSRVDTFVTKDGKVMVNEINTMPGFTSISMYPKAWEATGVRYTDLITKLIEGVLR.

One can recognise an ATP-grasp domain in the interval 149 to 374 (KVLLAAAGIP…YTDLITKLIE (226 aa)). 189 to 247 (EAGLQYPLFVKPSRAGSSFGVTKVEHEGDAAELAAAVYEASRHDWRILVEQGIDAREIE) provides a ligand contact to ATP. Mg(2+)-binding residues include aspartate 328, glutamate 341, and asparagine 343.

It belongs to the D-alanine--D-alanine ligase family. The cofactor is Mg(2+). Mn(2+) is required as a cofactor.

The protein localises to the cytoplasm. The catalysed reaction is 2 D-alanine + ATP = D-alanyl-D-alanine + ADP + phosphate + H(+). The protein operates within cell wall biogenesis; peptidoglycan biosynthesis. Functionally, cell wall formation. The chain is D-alanine--D-alanine ligase from Bifidobacterium adolescentis (strain ATCC 15703 / DSM 20083 / NCTC 11814 / E194a).